We begin with the raw amino-acid sequence, 132 residues long: Small ribosomal subunit protein uS11 (132 aa).

Belongs to the universal ribosomal protein uS11 family. Part of the 30S ribosomal subunit. Interacts with proteins S7 and S18. Binds to IF-3.

In terms of biological role, located on the platform of the 30S subunit, it bridges several disparate RNA helices of the 16S rRNA. Forms part of the Shine-Dalgarno cleft in the 70S ribosome. The polypeptide is Small ribosomal subunit protein uS11 (Chlamydia muridarum (strain MoPn / Nigg)).